The sequence spans 511 residues: Vicilin-like seed storage protein At2g28490 (511 aa).

A signal peptide spans 1–27 (MEKNKRAIGFLLLVVLINGVMMTRSNG). The interval 54–81 (GGGGGGAWGGEGEGGGEWGGGGEGGGGG) is disordered. Cupin type-1 domains are found at residues 86 to 238 (FMMR…PELQ) and 329 to 480 (YNIY…ETMR). 4 N-linked (GlcNAc...) asparagine glycosylation sites follow: Asn231, Asn369, Asn403, and Asn464.

This sequence belongs to the 7S seed storage protein family.

Seed storage protein. The protein is Vicilin-like seed storage protein At2g28490 of Arabidopsis thaliana (Mouse-ear cress).